The chain runs to 485 residues: GlcNAc-binding protein A (485 aa).

A signal peptide spans 1–29; the sequence is MKKQPQKTLLAIALSVVSGTAMSHGYVSA. One can recognise a Chitin-binding type-4 domain in the interval 30–200; the sequence is VENGVAEARV…SFYNVIDVKF (171 aa). A Chitin-binding type-3 domain is found at 437 to 478; that stretch reads ADTKVLASDGAIYQCKPFPYSGYCVQWTPTATQYQPGTGSHW.

It belongs to the GbpA family.

The protein localises to the secreted. Probably interacts with GlcNAc residues. May promote attachment to both epithelial cell surfaces and chitin. In Vibrio vulnificus (strain CMCP6), this protein is GlcNAc-binding protein A.